Reading from the N-terminus, the 98-residue chain is Flagellar hook-basal body complex protein FliE (98 aa).

Positions 1–23 are enriched in low complexity; that stretch reads MNNINDLRLNNNISNTNKSQNST. Residues 1 to 24 are disordered; the sequence is MNNINDLRLNNNISNTNKSQNSTG.

The protein belongs to the FliE family.

The protein localises to the bacterial flagellum basal body. The protein is Flagellar hook-basal body complex protein FliE of Campylobacter jejuni subsp. jejuni serotype O:2 (strain ATCC 700819 / NCTC 11168).